Reading from the N-terminus, the 323-residue chain is Aspartate carbamoyltransferase catalytic subunit (323 aa).

Residues Arg55 and Thr56 each coordinate carbamoyl phosphate. Lys83 lines the L-aspartate pocket. Residues Arg105, His138, and Gln141 each contribute to the carbamoyl phosphate site. Positions 181 and 235 each coordinate L-aspartate. 2 residues coordinate carbamoyl phosphate: Gly276 and Pro277.

The protein belongs to the aspartate/ornithine carbamoyltransferase superfamily. ATCase family. As to quaternary structure, heterododecamer (2C3:3R2) of six catalytic PyrB chains organized as two trimers (C3), and six regulatory PyrI chains organized as three dimers (R2).

The catalysed reaction is carbamoyl phosphate + L-aspartate = N-carbamoyl-L-aspartate + phosphate + H(+). The protein operates within pyrimidine metabolism; UMP biosynthesis via de novo pathway; (S)-dihydroorotate from bicarbonate: step 2/3. In terms of biological role, catalyzes the condensation of carbamoyl phosphate and aspartate to form carbamoyl aspartate and inorganic phosphate, the committed step in the de novo pyrimidine nucleotide biosynthesis pathway. The chain is Aspartate carbamoyltransferase catalytic subunit from Corynebacterium aurimucosum (strain ATCC 700975 / DSM 44827 / CIP 107346 / CN-1) (Corynebacterium nigricans).